A 250-amino-acid chain; its full sequence is MAVTKLVLVRHGESQWNNENRFTGWYDVDLSDKGRTEAKAAGQLLKKEGFTFDFAYTSVLKRAIHTLWNILDEVDQVWLPVEKSWRLNERHYGALQGLDKAETANKYGDEQVKQWRRGFAVTPPELDRADERFPGHDPRYASLTAEQLPTTESLALTIDRVLPYWNESILPRMKSGEKVIIAAHGNSLRALVKYLDNMSEEEILELNIPTGVPLVYEFDENFKPIKHYYLGDADEIAAKAAAVANQGKAK.

Residues 10 to 17, 23 to 24, R62, 89 to 92, K100, 116 to 117, and 185 to 186 each bind substrate; these read RHGESQWN, TG, ERHY, RR, and GN. H11 functions as the Tele-phosphohistidine intermediate in the catalytic mechanism. The active-site Proton donor/acceptor is E89.

This sequence belongs to the phosphoglycerate mutase family. BPG-dependent PGAM subfamily. In terms of assembly, homodimer.

The enzyme catalyses (2R)-2-phosphoglycerate = (2R)-3-phosphoglycerate. It functions in the pathway carbohydrate degradation; glycolysis; pyruvate from D-glyceraldehyde 3-phosphate: step 3/5. Catalyzes the interconversion of 2-phosphoglycerate and 3-phosphoglycerate. The chain is 2,3-bisphosphoglycerate-dependent phosphoglycerate mutase from Erwinia tasmaniensis (strain DSM 17950 / CFBP 7177 / CIP 109463 / NCPPB 4357 / Et1/99).